Consider the following 140-residue polypeptide: Large ribosomal subunit protein bL17 (140 aa).

Belongs to the bacterial ribosomal protein bL17 family. In terms of assembly, part of the 50S ribosomal subunit. Contacts protein L32.

In Rhizobium etli (strain CIAT 652), this protein is Large ribosomal subunit protein bL17.